We begin with the raw amino-acid sequence, 222 residues long: Collectrin (222 aa).

The signal sequence occupies residues Met-1–Ala-14. Residues Glu-15–Pro-141 lie on the Extracellular side of the membrane. Residues Ala-21–Leu-222 enclose the Collectrin-like domain. N-linked (GlcNAc...) asparagine glycosylation is found at Asn-76 and Asn-93. A helical membrane pass occupies residues Val-142–Val-162. Over Leu-163–Leu-222 the chain is Cytoplasmic. Phosphothreonine occurs at positions 214 and 220.

It belongs to the CLTRN family. In terms of assembly, monomer. Homodimer; dimerization prevents CLTRN cleavage by BACE2. Interacts with SLC6A18; this interaction regulates the trafficking of SLC6A18 to the cell membrane and its amino acid transporter activity. Interacts with SLC6A19; this interaction regulates the trafficking of SLC6A19 to the cell membrane and its amino acid transporter activity. Interacts with SNAPIN. Post-translationally, glycosylated. Glycosylation is required for plasma membrane localization and for its cleavage by BACE2. Proteolytically processed in pancreatic beta cells by BACE2 leading to the generation and extracellular release of soluble CLTRN, and a corresponding cell-associated C-terminal fragment which is later cleaved by gamma-secretase. This shedding process inactivates CLTRN. Three cleavage sites have been identified for BACE2, two clustered sites after Phe-116 and Leu-118 and a more membrane proximal site at Phe-125; the preferred BACE2 cleavage site seems to be between Phe-125 and Leu-126, Phe-116 and Leu-118 act as alternative sites. Kidney; collecting ducts. Pancreas; beta cells of islets.

It localises to the cell membrane. In terms of biological role, plays an important role in amino acid transport by acting as binding partner of amino acid transporters SLC6A18 and SLC6A19, regulating their trafficking on the cell surface and their activity. May also play a role in trafficking of amino acid transporters SLC3A1 and SLC7A9 to the renal cortical cell membrane. Regulator of SNARE complex function. Stimulator of beta cell replication. This is Collectrin from Rattus norvegicus (Rat).